The chain runs to 378 residues: Mannitol-1-phosphate 5-dehydrogenase (378 aa).

4 to 15 (SVHFGAGNIGRG) is an NAD(+) binding site.

It belongs to the mannitol dehydrogenase family.

The catalysed reaction is D-mannitol 1-phosphate + NAD(+) = beta-D-fructose 6-phosphate + NADH + H(+). This Streptococcus pneumoniae (strain ATCC BAA-255 / R6) protein is Mannitol-1-phosphate 5-dehydrogenase.